The following is a 589-amino-acid chain: Probable translation initiation factor IF-2 (589 aa).

Positions 5–219 constitute a tr-type G domain; sequence IRTPIVCVLG…IMIGLAQRYL (215 aa). Residues 14–21 form a G1 region; that stretch reads GHVDHGKT. 14 to 21 is a binding site for GTP; sequence GHVDHGKT. A G2 region spans residues 39–43; sequence AITQH. Residues 75-78 form a G3 region; the sequence is DTPG. GTP-binding positions include 75 to 79 and 129 to 132; these read DTPGH and TKLD. The G4 stretch occupies residues 129 to 132; sequence TKLD. Residues 197–199 are G5; sequence SSM.

Belongs to the TRAFAC class translation factor GTPase superfamily. Classic translation factor GTPase family. IF-2 subfamily.

Its function is as follows. Function in general translation initiation by promoting the binding of the formylmethionine-tRNA to ribosomes. Seems to function along with eIF-2. This Methanocorpusculum labreanum (strain ATCC 43576 / DSM 4855 / Z) protein is Probable translation initiation factor IF-2.